The following is a 428-amino-acid chain: Kynureninase (428 aa).

Pyridoxal 5'-phosphate-binding positions include threonine 104, threonine 105, 132-135, aspartate 213, histidine 216, and tyrosine 238; that span reads FPSD. Lysine 239 carries the post-translational modification N6-(pyridoxal phosphate)lysine. The pyridoxal 5'-phosphate site is built by tryptophan 267 and threonine 295.

The protein belongs to the kynureninase family. Homodimer. It depends on pyridoxal 5'-phosphate as a cofactor.

The enzyme catalyses L-kynurenine + H2O = anthranilate + L-alanine + H(+). The catalysed reaction is 3-hydroxy-L-kynurenine + H2O = 3-hydroxyanthranilate + L-alanine + H(+). The protein operates within amino-acid degradation; L-kynurenine degradation; L-alanine and anthranilate from L-kynurenine: step 1/1. Its pathway is cofactor biosynthesis; NAD(+) biosynthesis; quinolinate from L-kynurenine: step 2/3. Catalyzes the cleavage of L-kynurenine (L-Kyn) and L-3-hydroxykynurenine (L-3OHKyn) into anthranilic acid (AA) and 3-hydroxyanthranilic acid (3-OHAA), respectively. This is Kynureninase from Geobacillus thermodenitrificans (strain NG80-2).